Reading from the N-terminus, the 201-residue chain is Syndecan-2 (201 aa).

The N-terminal stretch at 1–18 (MQRAWILLTLGLMACVSA) is a signal peptide. The Extracellular segment spans residues 19–144 (ETRAELTSDK…HSDNLFKRTE (126 aa)). O-linked (Xyl...) (glycosaminoglycan) serine glycosylation is found at Ser-41, Ser-55, and Ser-57. 2 disordered regions span residues 42 to 69 (GLYP…PDLT) and 88 to 129 (TMTL…KSTD). Residues 90-102 (TLKTQSITPTQTE) show a composition bias toward polar residues. The span at 106 to 123 (ETDKKEFEISEAEEKQDP) shows a compositional bias: basic and acidic residues. The residue at position 115 (Ser-115) is a Phosphoserine. The helical transmembrane segment at 145-169 (VLAAVIAGGVIGFLFAIFLILLLVY) threads the bilayer. At 170 to 201 (RMRKKDEGSYDLGERKPSSAAYQKAPTKEFYA) the chain is on the cytoplasmic side. Residues 178–201 (SYDLGERKPSSAAYQKAPTKEFYA) form a disordered region. A Phosphoserine modification is found at Ser-187.

Belongs to the syndecan proteoglycan family. Interacts (via cytoplasmic domain) with SARM1. Forms a complex with SDCBP and PDCD6IP. Post-translationally, O-glycosylated; contains both heparan sulfate and chondroitin sulfate.

It localises to the membrane. Functionally, cell surface proteoglycan which regulates dendritic arbor morphogenesis. This Rattus norvegicus (Rat) protein is Syndecan-2 (Sdc2).